The sequence spans 872 residues: Alanine--tRNA ligase (872 aa).

Residues H567, H571, C669, and H673 each coordinate Zn(2+).

It belongs to the class-II aminoacyl-tRNA synthetase family. Zn(2+) serves as cofactor.

Its subcellular location is the cytoplasm. It catalyses the reaction tRNA(Ala) + L-alanine + ATP = L-alanyl-tRNA(Ala) + AMP + diphosphate. In terms of biological role, catalyzes the attachment of alanine to tRNA(Ala) in a two-step reaction: alanine is first activated by ATP to form Ala-AMP and then transferred to the acceptor end of tRNA(Ala). Also edits incorrectly charged Ser-tRNA(Ala) and Gly-tRNA(Ala) via its editing domain. This chain is Alanine--tRNA ligase, found in Streptococcus pyogenes serotype M4 (strain MGAS10750).